A 137-amino-acid chain; its full sequence is Ribosomal RNA large subunit methyltransferase H (137 aa).

Residues L56, G85, and 104 to 109 each bind S-adenosyl-L-methionine; that span reads LSPLTF.

This sequence belongs to the RNA methyltransferase RlmH family. As to quaternary structure, homodimer.

The protein resides in the cytoplasm. It catalyses the reaction pseudouridine(1915) in 23S rRNA + S-adenosyl-L-methionine = N(3)-methylpseudouridine(1915) in 23S rRNA + S-adenosyl-L-homocysteine + H(+). In terms of biological role, specifically methylates the pseudouridine at position 1915 (m3Psi1915) in 23S rRNA. In Prochlorococcus marinus subsp. pastoris (strain CCMP1986 / NIES-2087 / MED4), this protein is Ribosomal RNA large subunit methyltransferase H.